We begin with the raw amino-acid sequence, 237 residues long: uncharacterized protein (237 aa).

Residues Val119–Ala237 form the N-acetyltransferase domain.

This is an uncharacterized protein from Streptomyces virginiae (Streptomyces cinnamonensis).